The sequence spans 330 residues: DNA primase small subunit PriS (330 aa).

Catalysis depends on residues aspartate 101 and aspartate 103. Positions 116, 119, 128, and 131 each coordinate Zn(2+). Aspartate 235 is an active-site residue.

This sequence belongs to the eukaryotic-type primase small subunit family. In terms of assembly, heterodimer of a small subunit (PriS) and a large subunit (PriL). Requires Mg(2+) as cofactor. Mn(2+) serves as cofactor.

In terms of biological role, catalytic subunit of DNA primase, an RNA polymerase that catalyzes the synthesis of short RNA molecules used as primers for DNA polymerase during DNA replication. The small subunit contains the primase catalytic core and has DNA synthesis activity on its own. Binding to the large subunit stabilizes and modulates the activity, increasing the rate of DNA synthesis while decreasing the length of the DNA fragments, and conferring RNA synthesis capability. The DNA polymerase activity may enable DNA primase to also catalyze primer extension after primer synthesis. May also play a role in DNA repair. In Saccharolobus islandicus (strain M.16.27) (Sulfolobus islandicus), this protein is DNA primase small subunit PriS.